We begin with the raw amino-acid sequence, 206 residues long: Thymidylate kinase (206 aa).

16–23 (GIDGTGKS) is a binding site for ATP.

This sequence belongs to the thymidylate kinase family.

It carries out the reaction dTMP + ATP = dTDP + ADP. Functionally, phosphorylation of dTMP to form dTDP in both de novo and salvage pathways of dTTP synthesis. This is Thymidylate kinase from Akkermansia muciniphila (strain ATCC BAA-835 / DSM 22959 / JCM 33894 / BCRC 81048 / CCUG 64013 / CIP 107961 / Muc).